Here is a 77-residue protein sequence, read N- to C-terminus: UPF0270 protein Spro_4577 (77 aa).

The protein belongs to the UPF0270 family.

This chain is UPF0270 protein Spro_4577, found in Serratia proteamaculans (strain 568).